The chain runs to 203 residues: Endoplasmic reticulum transmembrane protein 3 (203 aa).

Residues 1–6 (MSLYYT) are Lumenal-facing. The helical transmembrane segment at 7–27 (LVFAILVVEIFMFSILALPIP) threads the bilayer. The Cytoplasmic portion of the chain corresponds to 28 to 45 (SRYRRPLTLLLLKPFKSS). The chain crosses the membrane as a helical span at residues 46 to 66 (TVQVAIKCVLGFILLLFIDCI). Topologically, residues 67–110 (NRVYSIDKELQLSSASQNNGAIIAQDRIEVLSRKFFAQRNMYLT) are lumenal. A helical transmembrane segment spans residues 111–131 (GITLFLTFVVVRTFGLVIELL). The Cytoplasmic segment spans residues 132–203 (TMKDIYRASP…KSESLQEEIN (72 aa)). The interval 142–171 (PVASSDVKKNDSVTAEAAAQSGASKDDHGD) is disordered.

This sequence belongs to the BCAP29/BCAP31 family.

It is found in the endoplasmic reticulum membrane. In terms of biological role, may play a role in anterograde transport of membrane proteins from the endoplasmic reticulum to the Golgi. May be involved in invertase secretion. In Saccharomyces cerevisiae (strain ATCC 204508 / S288c) (Baker's yeast), this protein is Endoplasmic reticulum transmembrane protein 3 (YET3).